A 560-amino-acid polypeptide reads, in one-letter code: Developmental and secondary metabolism regulator veA (560 aa).

The Velvet domain maps to 35–241 (GRRLWYRMRV…AEQGCRVRIR (207 aa)). Positions 49–54 (ERARAC) match the Nuclear localization signal motif. Disordered stretches follow at residues 49–70 (ERAR…VDPP), 171–197 (KEDK…ATGG), and 250–560 (DGKG…RLRY). A compositionally biased stretch (basic and acidic residues) spans 171–183 (KEDKDKDKERDVE). The segment covering 336 to 355 (AAPPQPFAQPPSVPASPVYP) has biased composition (pro residues). Basic and acidic residues predominate over residues 395 to 405 (PRRESIHHDYR). The span at 411–439 (QLPPLPPPPYYPPTPQQSHMPPPQPPQVL) shows a compositional bias: pro residues. The segment covering 444–453 (IDSNSKSNNR) has biased composition (polar residues). Residues 455 to 496 (PMPSPTALANSAPRPLASLAPLAPLMQSTSSSAGKGPVHPAT) form a PEST region. The span at 461-479 (ALANSAPRPLASLAPLAPL) shows a compositional bias: low complexity. 2 stretches are compositionally biased toward basic and acidic residues: residues 508 to 535 (RAHD…RSED) and 546 to 560 (RRAD…RLRY).

The protein belongs to the velvet family. VeA subfamily. Component of the heterotrimeric velvet complex composed of laeA, veA and velB; VeA acting as a bridging protein between laeA and velB.

It localises to the nucleus. The protein resides in the cytoplasm. Its function is as follows. Component of the velvet transcription factor complex that controls sexual/asexual developmental ratio in response to light, promoting sexual development in the darkness while stimulating asexual sporulation under illumination. The velvet complex acts as a global regulator for secondary metabolite gene expression. Positively regulates chaetoglobosin A biosynthesis by controlling the expression of core genes of the chaetoglobosin A biosynthetic gene cluster and other relevant regulators in a light-dependent manner. VeA directly regulates transcription factors brlA, laeA, and the chaetoglobosin A cluster-specific transcription regulator cheR. Also directly regulates the expression of one of the chaetoglobosin A cluster cytochrome P450 monooxygenases (cheE or cheG), but only indirectly regulates the expression of the PKS-NRPS hybrid cheA. Moreover, VeA has a significant effect on the asexual spores production, irrespective of light or dark condition. The sequence is that of Developmental and secondary metabolism regulator veA from Chaetomium globosum (strain ATCC 6205 / CBS 148.51 / DSM 1962 / NBRC 6347 / NRRL 1970) (Soil fungus).